Reading from the N-terminus, the 535-residue chain is MFLSIKRKIIEPYLVIRQSLAPLKLSRWQLTKIMARTAFDGLPSGTLIVLAALSLALLVAVLRIKSQERTRSKEIPGLPVVKRNHLHYLDIVREGRELYPGQPFMAVNKRHSLVVFPPSCFNEIKRLPAHTASAKKFFNTTNYGDWSHVGEESPELIKSVIADLTRSLPARVHTRQDECRDVFDEVVGRRREWKEFPLLMTTFEIITQINACSFVGKTLATNRSWVRSVMMLPVFIHVGVMLLDACPLIVRPFMAYLTFLPSIKNRWDLTRMLAPVLKKDLEEYHEAKDKKEFLRPRAEGKVPFTGFLLSHYKSAQASLKQLISDYIHLSFDSTPNTAAVMFHALCELAIHPEAVEALRQELDEVMVDGKLPPTHLQELRKMDSFLRECFRLHPFGIFTLQRRVEQPVQLSVGPLLPPGTLMAVDGQAIDGSSELWPNPEKFDVYRFYNLRQKLGNENQYHFATTSPDSPGWGDGTQACPGRFFAVNTLKIAMAHFLRNYDIEIKPECLPLKTKPMPSGFFSPDDRAIARIRART.

A helical transmembrane segment spans residues 42–62; the sequence is LPSGTLIVLAALSLALLVAVL. Residues Asn139 and Asn222 are each glycosylated (N-linked (GlcNAc...) asparagine). A heme-binding site is contributed by Cys479.

This sequence belongs to the cytochrome P450 family. Heme is required as a cofactor.

It is found in the membrane. It participates in mycotoxin biosynthesis. Functionally, cytochrome P450 monooxygenase; part of the gene cluster that mediates the biosynthesis of the mycotoxin pyrichalasin H, a tyrosine-derived cytochalasan that inhibits the growth of rice seedlings, but also inhibits lymphocyte capping and actin polymerization and alters cell morphology. Pyrichalasin H is indicated as the responsible agent for the genus-specific pathogenicity of M.grisea toward crabgrass. The first step in the pathway is catalyzed by the O-methyltransferase pyiA which methylates free tyrosine to generate the precursor O-methyltyrosine. The hybrid PKS-NRPS pyiS, assisted by the enoyl reductase pyiC, are responsible for fusion of the O-methyltyrosine precursor and the polyketide backbone. The polyketide synthase module (PKS) of pyiS is responsible for the synthesis of the polyketide backbone and the downstream nonribosomal peptide synthetase (NRPS) amidates the carboxyl end of the polyketide with the O-methyltyrosine precursor. As the NRPS A-domain demonstrates substrate tolerance, pyiS can also use phenylalanine, tyrosine and even para-chlorophenylalanine as amino acid precursor, which leads to the production of novel cytochalasans, including halogenated cytochalasans. Because pyiS lacks a designated enoylreductase (ER) domain, the required activity is provided the enoyl reductase pyiC. Reduction by the hydrolyase pyiE leads to 1,5-dihydropyrrolone, which is substrate for dehydration and intra-molecular Diels-Alder cyclization by the Diels-Alderase pyiF to yield the required isoindolone-fused macrocycle. The tailoring cytochrome P450 monooxygenases piyD and piyG catalyze the hydroxylation at C-18 and C-7, respectivily, whereas the short-chain dehydrogenase/reductase pyiH reduces the carbonyl at C-21 in preparation for the transfer of an acetyl group by the acetyltransferase pyiB. These 3 reactions whose order is not clear yet, lead to the production of O-methylpyrichalasin J, a deacetylated pyrichalasin H. Finally, pyiB to converts O-methylpyrichalasin J into the final product pyrichalasin H via acetylation of C-21. In Pyricularia grisea (Crabgrass-specific blast fungus), this protein is Pyrichalasin C-18 hydroxylase.